The primary structure comprises 170 residues: Large ribosomal subunit protein uL10 (170 aa).

It belongs to the universal ribosomal protein uL10 family. In terms of assembly, part of the ribosomal stalk of the 50S ribosomal subunit. The N-terminus interacts with L11 and the large rRNA to form the base of the stalk. The C-terminus forms an elongated spine to which L12 dimers bind in a sequential fashion forming a multimeric L10(L12)X complex.

Its function is as follows. Forms part of the ribosomal stalk, playing a central role in the interaction of the ribosome with GTP-bound translation factors. The sequence is that of Large ribosomal subunit protein uL10 from Corynebacterium urealyticum (strain ATCC 43042 / DSM 7109).